A 385-amino-acid polypeptide reads, in one-letter code: Aspartate/prephenate aminotransferase (385 aa).

3 residues coordinate L-aspartate: Gly-39, Trp-125, and Asn-175. The residue at position 234 (Lys-234) is an N6-(pyridoxal phosphate)lysine. Arg-361 lines the L-aspartate pocket.

It belongs to the class-I pyridoxal-phosphate-dependent aminotransferase family. Homodimer. It depends on pyridoxal 5'-phosphate as a cofactor.

The protein resides in the cytoplasm. The catalysed reaction is L-aspartate + 2-oxoglutarate = oxaloacetate + L-glutamate. It catalyses the reaction L-arogenate + oxaloacetate = prephenate + L-aspartate. Functionally, catalyzes the reversible conversion of aspartate and 2-oxoglutarate to glutamate and oxaloacetate. Can also transaminate prephenate in the presence of aspartate. This is Aspartate/prephenate aminotransferase (aspC) from Thermus thermophilus (strain ATCC 27634 / DSM 579 / HB8).